Reading from the N-terminus, the 231-residue chain is Elongation factor 1-delta 2 (231 aa).

N-acetylalanine is present on alanine 2. The GST C-terminal domain occupies 11-73 (SGLKKLDEHL…LRISGVSAEG (63 aa)). Positions 82 to 136 (SPITEEAVATPPAADSKDTAAEEEDDDDVDLFGEETEEEKKAAEERAASVKASTK) are disordered. A compositionally biased stretch (acidic residues) spans 102 to 118 (AEEEDDDDVDLFGEETE). Positions 119–129 (EEKKAAEERAA) are enriched in basic and acidic residues.

The protein belongs to the EF-1-beta/EF-1-delta family. EF-1 is composed of 4 subunits: alpha, beta (1B-alpha=beta'), delta (1B-beta), and gamma (1B-gamma).

EF-1-beta and EF-1-delta stimulate the exchange of GDP bound to EF-1-alpha to GTP. The sequence is that of Elongation factor 1-delta 2 from Arabidopsis thaliana (Mouse-ear cress).